Reading from the N-terminus, the 150-residue chain is 3-dehydroquinate dehydratase (150 aa).

Residue tyrosine 26 is the Proton acceptor of the active site. Residues asparagine 77, histidine 83, and aspartate 90 each coordinate substrate. The Proton donor role is filled by histidine 103. Residues 104–105 (LS) and arginine 114 contribute to the substrate site.

Belongs to the type-II 3-dehydroquinase family. In terms of assembly, homododecamer.

The enzyme catalyses 3-dehydroquinate = 3-dehydroshikimate + H2O. It functions in the pathway metabolic intermediate biosynthesis; chorismate biosynthesis; chorismate from D-erythrose 4-phosphate and phosphoenolpyruvate: step 3/7. Its function is as follows. Catalyzes a trans-dehydration via an enolate intermediate. The polypeptide is 3-dehydroquinate dehydratase (Vibrio cholerae serotype O1 (strain ATCC 39541 / Classical Ogawa 395 / O395)).